The following is a 684-amino-acid chain: UvrABC system protein C (684 aa).

Residues 16–95 form the GIY-YIG domain; sequence TDPGVYKFRD…IKRFDPRFNV (80 aa). A UVR domain is found at 208-243; sequence APVRKRVTQRMEEAAENLEFELAARLRDDLGAIDKL. A compositionally biased stretch (basic and acidic residues) spans 332–352; it reads EAAEDAKLERRGVDQESHAEP. A disordered region spans residues 332-357; that stretch reads EAAEDAKLERRGVDQESHAEPRQGNA.

The protein belongs to the UvrC family. In terms of assembly, interacts with UvrB in an incision complex.

The protein resides in the cytoplasm. Functionally, the UvrABC repair system catalyzes the recognition and processing of DNA lesions. UvrC both incises the 5' and 3' sides of the lesion. The N-terminal half is responsible for the 3' incision and the C-terminal half is responsible for the 5' incision. The chain is UvrABC system protein C from Corynebacterium aurimucosum (strain ATCC 700975 / DSM 44827 / CIP 107346 / CN-1) (Corynebacterium nigricans).